The primary structure comprises 475 residues: Ankyrin repeat, SAM and basic leucine zipper domain-containing protein 1 (475 aa).

Positions 1-25 are disordered; sequence MAAGALRGLPVAGGGESSESEDDGW. Phosphoserine occurs at positions 17, 18, and 20. ANK repeat units follow at residues 45-74, 78-107, 110-144, 148-177, 181-210, and 214-243; these read EKKE…SVDS, YGWT…NASF, DKQT…DPNV, RLMT…EVNT, NGYT…NKML, and DGKM…PLEG. Positions 272-334 constitute an SAM domain; sequence SYTAFGDLEV…KILAALKELQ (63 aa).

As to quaternary structure, interacts with DDX4, PIWIL1, RANBP9 and TDRD1.

It localises to the cytoplasm. Plays a central role during spermatogenesis by repressing transposable elements and preventing their mobilization, which is essential for the germline integrity. Acts via the piRNA metabolic process, which mediates the repression of transposable elements during meiosis by forming complexes composed of piRNAs and Piwi proteins and governs the methylation and subsequent repression of transposons. Its association with pi-bodies suggests a participation in the primary piRNAs metabolic process. Required prior to the pachytene stage to facilitate the production of multiple types of piRNAs, including those associated with repeats involved in the regulation of retrotransposons. May act by mediating protein-protein interactions during germ cell maturation. In Papio anubis (Olive baboon), this protein is Ankyrin repeat, SAM and basic leucine zipper domain-containing protein 1 (ASZ1).